A 610-amino-acid chain; its full sequence is Protein mono-ADP-ribosyltransferase PARP6 (610 aa).

A PARP catalytic domain is found at 374–600; the sequence is EMTQGSYLEI…QDPKIQKEIM (227 aa). D580 bears the ADP-ribosyl aspartic acid mark.

This sequence belongs to the ARTD/PARP family. Auto-mono-ADP-ribosylated.

It catalyses the reaction L-aspartyl-[protein] + NAD(+) = 4-O-(ADP-D-ribosyl)-L-aspartyl-[protein] + nicotinamide. The enzyme catalyses L-cysteinyl-[protein] + NAD(+) = S-(ADP-D-ribosyl)-L-cysteinyl-[protein] + nicotinamide + H(+). In terms of biological role, mono-ADP-ribosyltransferase that mediates mono-ADP-ribosylation of target proteins. This chain is Protein mono-ADP-ribosyltransferase PARP6, found in Pongo abelii (Sumatran orangutan).